An 84-amino-acid polypeptide reads, in one-letter code: Large ribosomal subunit protein bL27 (84 aa).

Residues 1-22 (MAHKKAGGSTRNGRDSESKRLG) are disordered.

This sequence belongs to the bacterial ribosomal protein bL27 family.

The chain is Large ribosomal subunit protein bL27 from Shewanella sp. (strain MR-4).